Reading from the N-terminus, the 302-residue chain is O-antigen biosynthesis glycosyltransferase WbnK (302 aa).

The protein belongs to the glycosyltransferase 11 family.

The catalysed reaction is beta-D-Gal-(1-&gt;3)-alpha-D-GalNAc-(1-&gt;3)-alpha-D-GalNAc-di-trans,octa-cis-undecaprenyl diphosphate + GDP-beta-L-fucose = alpha-L-Fuc-(1-&gt;2)-beta-D-Gal-(1-&gt;3)-alpha-D-GalNAc-(1-&gt;3)-alpha-D-GalNAc-di-trans,octa-cis-undecaprenyl diphosphate + GDP + H(+). Its pathway is bacterial outer membrane biogenesis; LPS O-antigen biosynthesis. Its function is as follows. Involved in the assembly of the O-repeating unit during O-antigen biosynthesis. The sequence is that of O-antigen biosynthesis glycosyltransferase WbnK from Escherichia coli.